The following is a 352-amino-acid chain: Histidinol-phosphate aminotransferase (352 aa).

Lys221 bears the N6-(pyridoxal phosphate)lysine mark.

Belongs to the class-II pyridoxal-phosphate-dependent aminotransferase family. Histidinol-phosphate aminotransferase subfamily. In terms of assembly, homodimer. The cofactor is pyridoxal 5'-phosphate.

The enzyme catalyses L-histidinol phosphate + 2-oxoglutarate = 3-(imidazol-4-yl)-2-oxopropyl phosphate + L-glutamate. It participates in amino-acid biosynthesis; L-histidine biosynthesis; L-histidine from 5-phospho-alpha-D-ribose 1-diphosphate: step 7/9. In Staphylococcus aureus (strain MRSA252), this protein is Histidinol-phosphate aminotransferase.